The following is a 318-amino-acid chain: Acetyl-coenzyme A carboxylase carboxyl transferase subunit alpha (318 aa).

The 262-residue stretch at 32–293 (DLSQEIESLE…KKALQKHLGE (262 aa)) folds into the CoA carboxyltransferase C-terminal domain.

The protein belongs to the AccA family. As to quaternary structure, acetyl-CoA carboxylase is a heterohexamer composed of biotin carboxyl carrier protein (AccB), biotin carboxylase (AccC) and two subunits each of ACCase subunit alpha (AccA) and ACCase subunit beta (AccD).

Its subcellular location is the cytoplasm. The enzyme catalyses N(6)-carboxybiotinyl-L-lysyl-[protein] + acetyl-CoA = N(6)-biotinyl-L-lysyl-[protein] + malonyl-CoA. It functions in the pathway lipid metabolism; malonyl-CoA biosynthesis; malonyl-CoA from acetyl-CoA: step 1/1. Component of the acetyl coenzyme A carboxylase (ACC) complex. First, biotin carboxylase catalyzes the carboxylation of biotin on its carrier protein (BCCP) and then the CO(2) group is transferred by the carboxyltransferase to acetyl-CoA to form malonyl-CoA. The polypeptide is Acetyl-coenzyme A carboxylase carboxyl transferase subunit alpha (Syntrophomonas wolfei subsp. wolfei (strain DSM 2245B / Goettingen)).